The following is a 146-amino-acid chain: 3-hydroxyacyl-[acyl-carrier-protein] dehydratase FabZ (146 aa).

Residue His49 is part of the active site.

It belongs to the thioester dehydratase family. FabZ subfamily.

Its subcellular location is the cytoplasm. It catalyses the reaction a (3R)-hydroxyacyl-[ACP] = a (2E)-enoyl-[ACP] + H2O. Its function is as follows. Involved in unsaturated fatty acids biosynthesis. Catalyzes the dehydration of short chain beta-hydroxyacyl-ACPs and long chain saturated and unsaturated beta-hydroxyacyl-ACPs. The polypeptide is 3-hydroxyacyl-[acyl-carrier-protein] dehydratase FabZ (Ectopseudomonas mendocina (strain ymp) (Pseudomonas mendocina)).